Reading from the N-terminus, the 421-residue chain is UDP-N-acetylglucosamine 1-carboxyvinyltransferase (421 aa).

23 to 24 is a phosphoenolpyruvate binding site; sequence KN. Arginine 92 contacts UDP-N-acetyl-alpha-D-glucosamine. Cysteine 116 (proton donor) is an active-site residue. Position 116 is a 2-(S-cysteinyl)pyruvic acid O-phosphothioketal (cysteine 116). UDP-N-acetyl-alpha-D-glucosamine-binding positions include 121 to 125, 161 to 164, aspartate 306, and isoleucine 328; these read RPVDL and KVSV.

Belongs to the EPSP synthase family. MurA subfamily.

It localises to the cytoplasm. It carries out the reaction phosphoenolpyruvate + UDP-N-acetyl-alpha-D-glucosamine = UDP-N-acetyl-3-O-(1-carboxyvinyl)-alpha-D-glucosamine + phosphate. It functions in the pathway cell wall biogenesis; peptidoglycan biosynthesis. Its function is as follows. Cell wall formation. Adds enolpyruvyl to UDP-N-acetylglucosamine. This chain is UDP-N-acetylglucosamine 1-carboxyvinyltransferase, found in Vibrio campbellii (strain ATCC BAA-1116).